A 481-amino-acid chain; its full sequence is Arf-GAP domain and FG repeat-containing protein 2 (481 aa).

In terms of domain architecture, Arf-GAP spans 27–153; sequence EVWCRRVREL…WYVPPDQVKG (127 aa). Residues 47 to 70 form a C4-type zinc finger; it reads CFECAQRGVTYVDITVGSFVCTTC. Disordered stretches follow at residues 150–220, 271–309, and 431–481; these read QVKG…SVKK, SSVF…APAS, and QQNG…NPFL. Residues 157-166 show a composition bias toward polar residues; it reads TKGSASTPVQ. Lys173 is subject to N6-acetyllysine. 3 stretches are compositionally biased toward polar residues: residues 188 to 210, 283 to 298, and 454 to 481; these read VAAS…ARST, ASFQ…SQGT, and AGIS…NPFL.

In terms of assembly, interacts with EPS15R.

In Homo sapiens (Human), this protein is Arf-GAP domain and FG repeat-containing protein 2 (AGFG2).